We begin with the raw amino-acid sequence, 208 residues long: Large ribosomal subunit protein uL4 (208 aa).

The segment at 44–85 (RQGTKKTKTRAEVRGGGKKPWRQKGTGRARQGSIRAPHWRGG) is disordered. Residues 59–70 (GGKKPWRQKGTG) show a composition bias toward basic residues.

This sequence belongs to the universal ribosomal protein uL4 family. Part of the 50S ribosomal subunit.

Functionally, one of the primary rRNA binding proteins, this protein initially binds near the 5'-end of the 23S rRNA. It is important during the early stages of 50S assembly. It makes multiple contacts with different domains of the 23S rRNA in the assembled 50S subunit and ribosome. Its function is as follows. Forms part of the polypeptide exit tunnel. The sequence is that of Large ribosomal subunit protein uL4 from Mesoplasma florum (strain ATCC 33453 / NBRC 100688 / NCTC 11704 / L1) (Acholeplasma florum).